The chain runs to 192 residues: dTTP/UTP pyrophosphatase (192 aa).

The active-site Proton acceptor is Asp-71.

The protein belongs to the Maf family. YhdE subfamily. A divalent metal cation is required as a cofactor.

Its subcellular location is the cytoplasm. The catalysed reaction is dTTP + H2O = dTMP + diphosphate + H(+). It carries out the reaction UTP + H2O = UMP + diphosphate + H(+). In terms of biological role, nucleoside triphosphate pyrophosphatase that hydrolyzes dTTP and UTP. May have a dual role in cell division arrest and in preventing the incorporation of modified nucleotides into cellular nucleic acids. This is dTTP/UTP pyrophosphatase from Clostridium kluyveri (strain NBRC 12016).